Here is a 949-residue protein sequence, read N- to C-terminus: Serine/threonine-protein kinase KIPK2 (949 aa).

Disordered regions lie at residues 79-116 (LETSASAGTSRSTSPSNKGAMKKPFPMGTPRSPRVGPS), 323-344 (TALSSGLKGKLDNFPGSGTEKS), 407-426 (STSTENHPPSNTSHTTDKNV), and 495-525 (SSEKFDFSLSSKNSLGDYSSSTSMSEESNLS). Residues 81–94 (TSASAGTSRSTSPS) are compositionally biased toward low complexity. Composition is skewed to polar residues over residues 407-420 (STSTENHPPSNTSH) and 495-512 (SSEKFDFSLSSKNSLGDY). Over residues 513–525 (SSSTSMSEESNLS) the composition is skewed to low complexity. The Protein kinase domain occupies 559–898 (FNLLKKLGCG…AAEIKRHPFF (340 aa)). Residues 565–573 (LGCGDIGTV) and K588 contribute to the ATP site. D684 serves as the catalytic Proton acceptor.

Belongs to the protein kinase superfamily. Ser/Thr protein kinase family. As to quaternary structure, interacts with KCBP, PERK8, PERK9, PERK10 and PERK13.

The enzyme catalyses L-seryl-[protein] + ATP = O-phospho-L-seryl-[protein] + ADP + H(+). The catalysed reaction is L-threonyl-[protein] + ATP = O-phospho-L-threonyl-[protein] + ADP + H(+). Functionally, serine/threonine-protein kinase that could be involved in the negative regulation of root growth. The chain is Serine/threonine-protein kinase KIPK2 from Arabidopsis thaliana (Mouse-ear cress).